The primary structure comprises 92 residues: uncharacterized protein (92 aa).

This is an uncharacterized protein from Escherichia coli O157:H7.